A 641-amino-acid chain; its full sequence is Pumilio homolog 24 (641 aa).

Positions 1–82 are disordered; the sequence is MSSKGLKPQK…LTEARKKKRK (82 aa). Positions 9–404 constitute a PUM-HD domain; it reads QKSTKRKDTD…RPLLQLLHPN (396 aa). 2 stretches are compositionally biased toward basic and acidic residues: residues 14 to 27 and 67 to 76; these read RKDT…DSLK and RVQAKELTEA. Pumilio repeat units lie at residues 118–153, 154–189, 190–225, 303–340, and 341–378; these read KMKG…VLFT, ELQP…ACIS, SLRG…ELLA, QLLT…KIIK, and AMKE…IIVR. Residues 427 to 468 form a disordered region; it reads MDKSETSSKTKDTDGNEIGEETKDEQEDTVAEHSDHEENVTA. The span at 428–440 shows a compositional bias: basic and acidic residues; the sequence is DKSETSSKTKDTD. Residues 441–455 show a composition bias toward acidic residues; that stretch reads GNEIGEETKDEQEDT. A compositionally biased stretch (basic and acidic residues) spans 456-468; the sequence is VAEHSDHEENVTA.

The protein localises to the nucleus. The protein resides in the nucleolus. Functionally, sequence-specific RNA-binding protein that regulates translation and mRNA stability by binding the 3'-UTR of target mRNAs. The polypeptide is Pumilio homolog 24 (APUM24) (Arabidopsis thaliana (Mouse-ear cress)).